Consider the following 144-residue polypeptide: Benzoylsuccinyl-CoA thiolase subunit BbsA (144 aa).

Zn(2+) contacts are provided by Cys40, Cys43, Cys54, and Cys57.

Belongs to the BbsA family. Heterotetramer composed of two BbsA subunits and two BbsB subunits. BbsA forms homodimeric subcomplexes. Both BbsA and BbsB are essential for enzymatic activity.

The enzyme catalyses (S)-2-benzoylsuccinyl-CoA + CoA = benzoyl-CoA + succinyl-CoA. Its pathway is xenobiotic degradation; toluene degradation. Component of the BbsAB thiolase complex, which catalyzes the thiolytic cleavage of (S)-2-benzoylsuccinyl-CoA to succinyl-CoA and benzoyl-CoA, the final step of anaerobic toluene metabolism. The BbsA subunit critically contributes to an induced-fit process for productive binding of a CoA substrate into the active site of BbsB. In Thauera aromatica, this protein is Benzoylsuccinyl-CoA thiolase subunit BbsA.